The sequence spans 830 residues: Frameshifted structural polyprotein (830 aa).

A disordered region spans residues 58 to 109 (AIAPARPPKPKKKKTTKPKPKTQPKKINGKTQQQKKKDKQADKKKKKPGKRE). Over residues 65 to 107 (PKPKKKKTTKPKPKTQPKKINGKTQQQKKKDKQADKKKKKPGK) the composition is skewed to basic residues. Positions 94–106 (KDKQADKKKKKPG) are ribosome-binding. Residues Cys-119 and Cys-134 are joined by a disulfide bond. The region spanning 119–267 (CIFEVKHEGK…RVTPEGSEEW (149 aa)) is the Peptidase S3 domain. Active-site charge relay system residues include His-145, Asp-167, and Ser-219. Residues Asn-280, Asn-327, Asn-533, and Asn-595 are each glycosylated (N-linked (GlcNAc...) asparagine; by host). A helical membrane pass occupies residues 702–722 (AVVGMSLLALISIFASCYMLV). S-palmitoyl cysteine; by host attachment occurs at residues Cys-718, Cys-728, Cys-748, and Cys-749. Residues 728–748 (CLTPYALTPGAAVPWTLGILC) are transient transmembrane before p62-6K protein processing. Transmembrane regions (helical) follow at residues 771–791 (ALFWLEFAAPVACILIITYCL) and 793–813 (NVLCCCKSLSFLSATEPRGHR).

Homodimer. Homomultimer. Interacts with host karyopherin KPNA4; this interaction allows the nuclear import of the viral capsid protein. Precursor of protein E3/E2: The precursor of protein E3/E2 and E1 form a heterodimer shortly after synthesis. Interacts with host IRAK1; the interaction leads to inhibition of IRAK1-dependent signaling. In terms of assembly, processing of the precursor of protein E3/E2 into E2 and E3 results in a heterodimer of the spike glycoproteins E2 and E1. Spike at virion surface are constituted of three E2-E1 heterodimers. Interacts with 6K protein. Interacts with host MXRA8; this interaction mediates virus entry. Specific enzymatic cleavages in vivo yield mature proteins. Capsid protein is auto-cleaved during polyprotein translation, unmasking a signal peptide at the N-terminus of the precursor of E3/E2. The remaining polyprotein is then targeted to the host endoplasmic reticulum, where host signal peptidase cleaves it into pE2 and TF. pE2 is further processed to mature E3 and E2 by host furin in trans-Golgi vesicle.

Its subcellular location is the virion. The protein localises to the host cytoplasm. It is found in the host cell membrane. The protein resides in the host nucleus. It localises to the virion membrane. The enzyme catalyses Autocatalytic release of the core protein from the N-terminus of the togavirus structural polyprotein by hydrolysis of a -Trp-|-Ser- bond.. Forms an icosahedral capsid with a T=4 symmetry composed of 240 copies of the capsid protein surrounded by a lipid membrane through which penetrate 80 spikes composed of trimers of E1-E2 heterodimers. The capsid protein binds to the viral RNA genome at a site adjacent to a ribosome binding site for viral genome translation following genome release. Possesses a protease activity that results in its autocatalytic cleavage from the nascent structural protein. Following its self-cleavage, the capsid protein transiently associates with ribosomes, and within several minutes the protein binds to viral RNA and rapidly assembles into icosahedric core particles. The resulting nucleocapsid eventually associates with the cytoplasmic domain of the spike glycoprotein E2 at the cell membrane, leading to budding and formation of mature virions. In case of infection, new virions attach to target cells and after clathrin-mediated endocytosis their membrane fuses with the host endosomal membrane. This leads to the release of the nucleocapsid into the cytoplasm, followed by an uncoating event necessary for the genomic RNA to become accessible. The uncoating might be triggered by the interaction of capsid proteins with ribosomes. Binding of ribosomes would release the genomic RNA since the same region is genomic RNA-binding and ribosome-binding. Specifically inhibits interleukin-1 receptor-associated kinase 1/IRAK1-dependent signaling during viral entry, representing a means by which the alphaviruses may evade innate immune detection and activation prior to viral gene expression. Its function is as follows. Provides the signal sequence for p62 (E3/E2) translocation to the host endoplasmic reticulum. Mediates pH protection of E1 during secretory pathway trans- port. In terms of biological role, plays a role in viral attachment to target host cell, by binding to the cell receptor. Synthesized as a p62 precursor which is processed by furin at the cell membrane just before virion budding, giving rise to E2-E1 heterodimer. The p62-E1 heterodimer is stable, whereas E2-E1 is unstable and dissociate at low pH. p62 is processed at the last step, presumably to avoid E1 fusion activation before its final export to cell surface. E2 C-terminus contains a transitory transmembrane that would be disrupted by palmitoylation, resulting in reorientation of the C-terminal tail from lumenal to cytoplasmic side. This step is critical since E2 C-terminus is involved in budding by interacting with capsid proteins. This release of E2 C-terminus in cytoplasm occurs lately in protein export, and precludes premature assembly of particles at the endoplasmic reticulum membrane. Functionally, virion component that may play a role during viral assembly. The polypeptide is Frameshifted structural polyprotein (Aedes (Middle-African hedgehog)).